Consider the following 328-residue polypeptide: Phosphate acyltransferase (328 aa).

Belongs to the PlsX family. As to quaternary structure, homodimer. Probably interacts with PlsY.

The protein resides in the cytoplasm. It carries out the reaction a fatty acyl-[ACP] + phosphate = an acyl phosphate + holo-[ACP]. It functions in the pathway lipid metabolism; phospholipid metabolism. Catalyzes the reversible formation of acyl-phosphate (acyl-PO(4)) from acyl-[acyl-carrier-protein] (acyl-ACP). This enzyme utilizes acyl-ACP as fatty acyl donor, but not acyl-CoA. In Staphylococcus aureus (strain MRSA252), this protein is Phosphate acyltransferase.